Consider the following 203-residue polypeptide: Probable chemoreceptor glutamine deamidase CheD (203 aa).

Belongs to the CheD family.

The catalysed reaction is L-glutaminyl-[protein] + H2O = L-glutamyl-[protein] + NH4(+). Functionally, probably deamidates glutamine residues to glutamate on methyl-accepting chemotaxis receptors (MCPs), playing an important role in chemotaxis. This Herminiimonas arsenicoxydans protein is Probable chemoreceptor glutamine deamidase CheD.